Reading from the N-terminus, the 310-residue chain is Malate dehydrogenase (310 aa).

NAD(+) is bound by residues 7–12 (GAGNVG) and Asp32. Substrate contacts are provided by Arg81 and Arg87. Residues Asn94 and 117 to 119 (VSN) each bind NAD(+). Asn119 and Arg150 together coordinate substrate. The active-site Proton acceptor is His174.

Belongs to the LDH/MDH superfamily. MDH type 3 family. In terms of assembly, homotetramer; arranged as a dimer of dimers.

The catalysed reaction is (S)-malate + NAD(+) = oxaloacetate + NADH + H(+). Its function is as follows. Catalyzes the reversible oxidation of malate to oxaloacetate. The chain is Malate dehydrogenase from Prosthecochloris vibrioformis (Chlorobium vibrioforme).